The chain runs to 131 residues: Ribosome-binding factor A (131 aa).

It belongs to the RbfA family. In terms of assembly, monomer. Binds 30S ribosomal subunits, but not 50S ribosomal subunits or 70S ribosomes.

It is found in the cytoplasm. In terms of biological role, one of several proteins that assist in the late maturation steps of the functional core of the 30S ribosomal subunit. Associates with free 30S ribosomal subunits (but not with 30S subunits that are part of 70S ribosomes or polysomes). Required for efficient processing of 16S rRNA. May interact with the 5'-terminal helix region of 16S rRNA. This Ruegeria sp. (strain TM1040) (Silicibacter sp.) protein is Ribosome-binding factor A.